We begin with the raw amino-acid sequence, 550 residues long: Probable importin subunit alpha-A (550 aa).

A compositionally biased stretch (basic and acidic residues) spans 1-30; sequence MSSRDKQDSRKKEFKKSLDSETARRKREEN. Residues 1 to 34 form a disordered region; sequence MSSRDKQDSRKKEFKKSLDSETARRKREENSIGI. The 56-residue stretch at 1–56 folds into the IBB domain; the sequence is MSSRDKQDSRKKEFKKSLDSETARRKREENSIGIRKNAREELMLKRRGIVQPNPST. ARM repeat units lie at residues 116-155, 158-198, 201-241, 256-297, 300-339, 342-381, 385-424, and 428-467; these read YPPI…NIAS, NRQT…NIAG, VDSR…KIGL, KPQP…YLCD, NTKI…NIVT, SSQT…NITA, SQID…NSTN, and TKSI…NIIK.

Belongs to the importin alpha family. Forms a complex with tnpo/importin subunit beta.

The protein resides in the cytoplasm. Its subcellular location is the nucleus envelope. In terms of biological role, functions in nuclear protein import via a substrate-importin alpha-beta transport complex that passes though the nuclear pore complexes (NPC). Binds specifically and directly to substrates containing either a simple or bipartite NLS motif. In Dictyostelium discoideum (Social amoeba), this protein is Probable importin subunit alpha-A.